Here is a 114-residue protein sequence, read N- to C-terminus: DNA-directed RNA polymerases II, IV and V subunit 9B (114 aa).

Zn(2+) contacts are provided by cysteine 7, cysteine 10, cysteine 29, cysteine 32, cysteine 76, cysteine 79, cysteine 103, and cysteine 108. The segment at 72–113 (KAVRCAKCQHGEAVFFQATARGEEGMTLFFVCCNPNCSHRWR) adopts a TFIIS-type zinc-finger fold.

The protein belongs to the archaeal RpoM/eukaryotic RPA12/RPB9/RPC11 RNA polymerase family. As to quaternary structure, component of the RNA polymerase II, IV and V complexes. Interacts with NRPD1.

Its subcellular location is the nucleus. It is found in the nucleolus. Functionally, DNA-dependent RNA polymerase catalyzes the transcription of DNA into RNA using the four ribonucleoside triphosphates as substrates. Component of RNA polymerase II which synthesizes mRNA precursors and many functional non-coding RNAs. Pol II is the central component of the basal RNA polymerase II transcription machinery. It is composed of mobile elements that move relative to each other. Component of RNA polymerases IV and V which mediate short-interfering RNAs (siRNA) accumulation and subsequent RNA-directed DNA methylation-dependent (RdDM) transcriptional gene silencing (TGS) of endogenous repeated sequences, including transposable elements. Required for RNA silencing. The sequence is that of DNA-directed RNA polymerases II, IV and V subunit 9B (NRPB9B) from Arabidopsis thaliana (Mouse-ear cress).